We begin with the raw amino-acid sequence, 523 residues long: Sensory neuron membrane protein 1 (523 aa).

Over 1-11 (MQLPRELKYAA) the chain is Cytoplasmic. The chain crosses the membrane as a helical span at residues 12–32 (IAGGVALFGLIFGWVLFPTIL). Topologically, residues 33-458 (KSQLKKEMAL…HQLFIPKRVV (426 aa)) are extracellular. A glycan (N-linked (GlcNAc...) asparagine) is linked at asparagine 229. 3 disulfide bridges follow: cysteine 268/cysteine 333, cysteine 297/cysteine 352, and cysteine 335/cysteine 341. The N-linked (GlcNAc...) asparagine glycan is linked to asparagine 440. A helical transmembrane segment spans residues 459 to 479 (GVLRWWMVSFGSLGAVIGIVF). Residues 480-523 (HFRDHIMRLAVSGDTKVSKVIPEVEEQKDISVIGQAQEPAKVNI) lie on the Cytoplasmic side of the membrane.

It belongs to the CD36 family.

It is found in the cell membrane. In terms of biological role, plays an olfactory role that is not restricted to pheromone sensitivity. This chain is Sensory neuron membrane protein 1, found in Helicoverpa assulta (Oriental tobacco budworm).